Here is a 539-residue protein sequence, read N- to C-terminus: MHDKILILDFGSQVTQLIARRVREAHVYCEIHPNDVSDEFVREYAPKGIILSGSHASTYEDHQLRAPQAVWDLGVPVLGICYGMQTMAVQLGGKVEWSDHREFGYAEVRAHGHTPLLKDIEDFSTAEGHGMLKVWMSHGDKVAALPPGFKLMASTPSCPIAGMADEARGYYAVQFHPEVTHTSKGREMIERFVLGICRAKADWVMKDHIEEAVALIRKQVGDEEVILGLSGGVDSSVAAALIHRAIGDQLTCVFVDHGLLRLDEGKMVMDMFAGRLHAKVVHIDASEQFLGHLAGVTDPEQKRKIIGREFVEVFQAEAKKLSNAKWLAQGTIYPDVVESGGTKTKKATTIKSHHNVGGLPETLGLKLLEPLRDLFKDEVRQLGVALGLPPEMVYRHPFPGPGLGVRILGEVKRDYADLLRRADAIFIEELRKTIATEQDAAAGLCEPQQVGKSWYDLTSQAFAVFLPVKSVGVMGDGRTYDYVVALRAVQTTDFMTAHWAHLPYSLLGRCSNRIINEVRGLNRVVYDVSGKPPATIEWE.

Positions 4 to 202 constitute a Glutamine amidotransferase type-1 domain; sequence KILILDFGSQ…VLGICRAKAD (199 aa). The active-site Nucleophile is C81. Catalysis depends on residues H176 and E178. The GMPS ATP-PPase domain occupies 203–395; that stretch reads WVMKDHIEEA…LGLPPEMVYR (193 aa). Position 230 to 236 (230 to 236) interacts with ATP; the sequence is SGGVDSS.

In terms of assembly, homodimer.

It carries out the reaction XMP + L-glutamine + ATP + H2O = GMP + L-glutamate + AMP + diphosphate + 2 H(+). The protein operates within purine metabolism; GMP biosynthesis; GMP from XMP (L-Gln route): step 1/1. In terms of biological role, catalyzes the synthesis of GMP from XMP. This Cupriavidus pinatubonensis (strain JMP 134 / LMG 1197) (Cupriavidus necator (strain JMP 134)) protein is GMP synthase [glutamine-hydrolyzing].